A 316-amino-acid polypeptide reads, in one-letter code: Acetyl-coenzyme A carboxylase carboxyl transferase subunit alpha (316 aa).

The CoA carboxyltransferase C-terminal domain occupies 35–292; that stretch reads EIEILSQKLE…KTYVLQELKD (258 aa).

The protein belongs to the AccA family. In terms of assembly, acetyl-CoA carboxylase is a heterohexamer composed of biotin carboxyl carrier protein (AccB), biotin carboxylase (AccC) and two subunits each of ACCase subunit alpha (AccA) and ACCase subunit beta (AccD).

It is found in the cytoplasm. It catalyses the reaction N(6)-carboxybiotinyl-L-lysyl-[protein] + acetyl-CoA = N(6)-biotinyl-L-lysyl-[protein] + malonyl-CoA. Its pathway is lipid metabolism; malonyl-CoA biosynthesis; malonyl-CoA from acetyl-CoA: step 1/1. Its function is as follows. Component of the acetyl coenzyme A carboxylase (ACC) complex. First, biotin carboxylase catalyzes the carboxylation of biotin on its carrier protein (BCCP) and then the CO(2) group is transferred by the carboxyltransferase to acetyl-CoA to form malonyl-CoA. In Alkaliphilus oremlandii (strain OhILAs) (Clostridium oremlandii (strain OhILAs)), this protein is Acetyl-coenzyme A carboxylase carboxyl transferase subunit alpha.